A 24-amino-acid chain; its full sequence is FLPILASLAAKFGPKLFCLVTKKC.

Cysteine 18 and cysteine 24 are disulfide-bonded.

Expressed by the skin glands.

Its subcellular location is the secreted. Antibacterial activity against Gram-positive bacterium S.aureus and Gram-negative bacterium E.coli. High antifungal activity against C.albicans and a strong hemolytic activity. This Rana boylii (Foothill yellow-legged frog) protein is Brevinin-1BYa.